The primary structure comprises 476 residues: Cytochrome c oxidase subunit 1 (476 aa).

A helical transmembrane segment spans residues 19–39; it reads LYYLWFSFLFGTYGFLLSVIL. Residue Glu-42 coordinates Ca(2+). 8 helical membrane passes run 61-81, 105-125, 144-164, 194-214, 240-260, 278-298, 309-329, and 345-365; these read MIFTIHGIIMIFFNIMPGLFG, ISLLLQPIAFILVILSTAAEF, LSPVAVDVIIIGLLVSGIASI, IIITSIMLLLTLPVLTGGVLM, LFWFFGHPEVYILILPAFGVI, MILAMGCIAVLGSVVWVHHMY, FFTSTTILISIPTGTKVFNWL, and LLCLLFICTFTFGGTTGVILG. His-66 serves as a coordination point for Fe(II)-heme a. A Cu cation-binding site is contributed by His-246. Residues 246–250 constitute a cross-link (1'-histidyl-3'-tyrosine (His-Tyr)); that stretch reads HPEVY. Residue Tyr-250 coordinates O2. The Cu cation site is built by His-295 and His-296. His-374 and Asp-375 together coordinate Mg(2+). The next 2 helical transmembrane spans lie at 379–399 and 415–435; these read VIAHFHFVLSIGAIIALFTCV and TLIVLWSILFFIGVILTFLPM. His-382 provides a ligand contact to heme a3. A Fe(II)-heme a-binding site is contributed by His-384. Ca(2+) is bound at residue Pro-448. Residues 455–475 form a helical membrane-spanning segment; that stretch reads NGWNMICSIGSTMTLFGLLIF.

Belongs to the heme-copper respiratory oxidase family. As to quaternary structure, component of the cytochrome c oxidase (complex IV, CIV), a multisubunit enzyme composed of a catalytic core of 3 subunits and several supernumerary subunits. The complex exists as a monomer or a dimer and forms supercomplexes (SCs) in the inner mitochondrial membrane with ubiquinol-cytochrome c oxidoreductase (cytochrome b-c1 complex, complex III, CIII). It depends on heme as a cofactor. Requires Cu cation as cofactor.

It localises to the mitochondrion inner membrane. The catalysed reaction is 4 Fe(II)-[cytochrome c] + O2 + 8 H(+)(in) = 4 Fe(III)-[cytochrome c] + 2 H2O + 4 H(+)(out). It participates in energy metabolism; oxidative phosphorylation. In terms of biological role, component of the cytochrome c oxidase, the last enzyme in the mitochondrial electron transport chain which drives oxidative phosphorylation. The respiratory chain contains 3 multisubunit complexes succinate dehydrogenase (complex II, CII), ubiquinol-cytochrome c oxidoreductase (cytochrome b-c1 complex, complex III, CIII) and cytochrome c oxidase (complex IV, CIV), that cooperate to transfer electrons derived from NADH and succinate to molecular oxygen, creating an electrochemical gradient over the inner membrane that drives transmembrane transport and the ATP synthase. Cytochrome c oxidase is the component of the respiratory chain that catalyzes the reduction of oxygen to water. Electrons originating from reduced cytochrome c in the intermembrane space (IMS) are transferred via the dinuclear copper A center (CU(A)) of subunit 2 and heme A of subunit 1 to the active site in subunit 1, a binuclear center (BNC) formed by heme A3 and copper B (CU(B)). The BNC reduces molecular oxygen to 2 water molecules using 4 electrons from cytochrome c in the IMS and 4 protons from the mitochondrial matrix. This Plasmodium berghei protein is Cytochrome c oxidase subunit 1 (COI).